The following is a 69-amino-acid chain: Sec-independent protein translocase protein TatA (69 aa).

The helical transmembrane segment at Met-1–Gly-21 threads the bilayer.

It belongs to the TatA/E family. In terms of assembly, the Tat system comprises two distinct complexes: a TatABC complex, containing multiple copies of TatA, TatB and TatC subunits, and a separate TatA complex, containing only TatA subunits. Substrates initially bind to the TatABC complex, which probably triggers association of the separate TatA complex to form the active translocon.

The protein resides in the cell inner membrane. In terms of biological role, part of the twin-arginine translocation (Tat) system that transports large folded proteins containing a characteristic twin-arginine motif in their signal peptide across membranes. TatA could form the protein-conducting channel of the Tat system. This is Sec-independent protein translocase protein TatA from Vesicomyosocius okutanii subsp. Calyptogena okutanii (strain HA).